Here is a 283-residue protein sequence, read N- to C-terminus: Phosphatidylglycerol--prolipoprotein diacylglyceryl transferase (283 aa).

Helical transmembrane passes span 17-37 (LAVR…TFLG), 56-76 (FLTW…VLFY), 92-112 (WEGG…IWLF), and 117-137 (GIGF…GLAS). Arginine 139 is a binding site for a 1,2-diacyl-sn-glycero-3-phospho-(1'-sn-glycerol). 3 helical membrane-spanning segments follow: residues 194-214 (PSQL…VWLF), 222-242 (GQVA…AEFA), and 255-275 (GLSM…VGFV).

It belongs to the Lgt family.

It localises to the cell inner membrane. The enzyme catalyses L-cysteinyl-[prolipoprotein] + a 1,2-diacyl-sn-glycero-3-phospho-(1'-sn-glycerol) = an S-1,2-diacyl-sn-glyceryl-L-cysteinyl-[prolipoprotein] + sn-glycerol 1-phosphate + H(+). The protein operates within protein modification; lipoprotein biosynthesis (diacylglyceryl transfer). Its function is as follows. Catalyzes the transfer of the diacylglyceryl group from phosphatidylglycerol to the sulfhydryl group of the N-terminal cysteine of a prolipoprotein, the first step in the formation of mature lipoproteins. This Neisseria meningitidis serogroup C / serotype 2a (strain ATCC 700532 / DSM 15464 / FAM18) protein is Phosphatidylglycerol--prolipoprotein diacylglyceryl transferase.